Here is an 846-residue protein sequence, read N- to C-terminus: Rho GTPase-activating protein 12 (846 aa).

One can recognise an SH3 domain in the interval proline 12–arginine 74. Residues leucine 152–arginine 175 are compositionally biased toward polar residues. The disordered stretch occupies residues leucine 152–proline 241. Phosphoserine occurs at positions 165 and 176. Residues threonine 191–aspartate 200 are compositionally biased toward polar residues. Residues serine 201, serine 213, and serine 215 each carry the phosphoserine modification. Positions threonine 224–asparagine 234 are enriched in polar residues. Residues threonine 230 and threonine 231 each carry the phosphothreonine modification. Serine 240 is subject to Phosphoserine. Tyrosine 243 is modified (phosphotyrosine). WW domains follow at residues isoleucine 265–tryptophan 298 and aspartate 358–tyrosine 391. Residues tryptophan 293–glutamate 316 form a disordered region. Disordered stretches follow at residues aspartate 428–lysine 466 and glutamate 580–asparagine 629. The segment covering asparagine 445–proline 461 has biased composition (polar residues). The PH domain occupies aspartate 463–asparagine 575. Acidic residues predominate over residues glutamate 580–proline 590. Residue serine 592 is modified to Phosphoserine. Positions glycine 594–lysine 609 are enriched in basic and acidic residues. In terms of domain architecture, Rho-GAP spans serine 656 to phenylalanine 844.

Functionally, GTPase activator for the Rho-type GTPases by converting them to an inactive GDP-bound state. The protein is Rho GTPase-activating protein 12 (ARHGAP12) of Homo sapiens (Human).